An 86-amino-acid polypeptide reads, in one-letter code: Large ribosomal subunit protein bL27 (86 aa).

This sequence belongs to the bacterial ribosomal protein bL27 family.

The sequence is that of Large ribosomal subunit protein bL27 from Christiangramia forsetii (strain DSM 17595 / CGMCC 1.15422 / KT0803) (Gramella forsetii).